The following is a 122-amino-acid chain: Large ribosomal subunit protein uL14 (122 aa).

This sequence belongs to the universal ribosomal protein uL14 family. As to quaternary structure, part of the 50S ribosomal subunit. Forms a cluster with proteins L3 and L19. In the 70S ribosome, L14 and L19 interact and together make contacts with the 16S rRNA in bridges B5 and B8.

Its function is as follows. Binds to 23S rRNA. Forms part of two intersubunit bridges in the 70S ribosome. This Chlorobium phaeobacteroides (strain DSM 266 / SMG 266 / 2430) protein is Large ribosomal subunit protein uL14.